A 207-amino-acid chain; its full sequence is MALPFARCWNLYRWGTKRWGVTAGESRRGISFKLEEKTAHSSLALFRGDTGVKYGLVGLEPTKVALNLERFRDWAVVLADTTVTSGRHYWEVTVKRSQQFRIGVADVDMSRDSCVGADDRSWVFSYAQRKWHSMLANEKAPIKGIGQPEKVGLLLDYEAKKLSLVDVNRISVIHTLQTDFRGPVAPAFALWDGELLTHSGLEVPKGL.

One can recognise a B30.2/SPRY domain in the interval 12–207 (YRWGTKRWGV…HSGLEVPKGL (196 aa)). N6-acetyllysine is present on residues K53 and K130. Residue K139 is modified to N6-succinyllysine.

This Rattus norvegicus (Rat) protein is SPRY domain-containing protein 4 (Spryd4).